Consider the following 352-residue polypeptide: UDP-N-acetylglucosamine--N-acetylmuramyl-(pentapeptide) pyrophosphoryl-undecaprenol N-acetylglucosamine transferase (352 aa).

2 residues coordinate UDP-N-acetyl-alpha-D-glucosamine: Ser-195 and Gln-287.

It belongs to the glycosyltransferase 28 family. MurG subfamily.

It localises to the cell membrane. It catalyses the reaction Mur2Ac(oyl-L-Ala-gamma-D-Glu-L-Lys-D-Ala-D-Ala)-di-trans,octa-cis-undecaprenyl diphosphate + UDP-N-acetyl-alpha-D-glucosamine = beta-D-GlcNAc-(1-&gt;4)-Mur2Ac(oyl-L-Ala-gamma-D-Glu-L-Lys-D-Ala-D-Ala)-di-trans,octa-cis-undecaprenyl diphosphate + UDP + H(+). The protein operates within cell wall biogenesis; peptidoglycan biosynthesis. Cell wall formation. Catalyzes the transfer of a GlcNAc subunit on undecaprenyl-pyrophosphoryl-MurNAc-pentapeptide (lipid intermediate I) to form undecaprenyl-pyrophosphoryl-MurNAc-(pentapeptide)GlcNAc (lipid intermediate II). The sequence is that of UDP-N-acetylglucosamine--N-acetylmuramyl-(pentapeptide) pyrophosphoryl-undecaprenol N-acetylglucosamine transferase from Streptococcus pneumoniae serotype 4 (strain ATCC BAA-334 / TIGR4).